The chain runs to 163 residues: ATP synthase subunit b (163 aa).

Residues 1-11 (MLWKANVWVLG) constitute a propeptide that is removed on maturation. A helical membrane pass occupies residues 16–36 (GISGGTIIYQLLMFIILLALL).

This sequence belongs to the ATPase B chain family. In terms of assembly, F-type ATPases have 2 components, F(1) - the catalytic core - and F(0) - the membrane proton channel. F(1) has five subunits: alpha(3), beta(3), gamma(1), delta(1), epsilon(1). F(0) has three main subunits: a(1), b(2) and c(10-14). The alpha and beta chains form an alternating ring which encloses part of the gamma chain. F(1) is attached to F(0) by a central stalk formed by the gamma and epsilon chains, while a peripheral stalk is formed by the delta and b chains.

Its subcellular location is the cell membrane. F(1)F(0) ATP synthase produces ATP from ADP in the presence of a proton or sodium gradient. F-type ATPases consist of two structural domains, F(1) containing the extramembraneous catalytic core and F(0) containing the membrane proton channel, linked together by a central stalk and a peripheral stalk. During catalysis, ATP synthesis in the catalytic domain of F(1) is coupled via a rotary mechanism of the central stalk subunits to proton translocation. In terms of biological role, component of the F(0) channel, it forms part of the peripheral stalk, linking F(1) to F(0). The sequence is that of ATP synthase subunit b from Bacillus sp. (strain PS3).